A 373-amino-acid polypeptide reads, in one-letter code: Putative glutamate--cysteine ligase 2-2 (373 aa).

This sequence belongs to the glutamate--cysteine ligase type 2 family. YbdK subfamily.

It catalyses the reaction L-cysteine + L-glutamate + ATP = gamma-L-glutamyl-L-cysteine + ADP + phosphate + H(+). Functionally, ATP-dependent carboxylate-amine ligase which exhibits weak glutamate--cysteine ligase activity. The protein is Putative glutamate--cysteine ligase 2-2 of Legionella pneumophila (strain Corby).